The chain runs to 568 residues: Natural resistance-associated macrophage protein 2 (568 aa).

Residues 1-40 (MVLGPEQKMSDDSVSGDHGESASLGNINPAYSNPSLSQSP) are disordered. The Cytoplasmic segment spans residues 1 to 69 (MVLGPEQKMS…EEYSCFSFRK (69 aa)). Residues 8–20 (KMSDDSVSGDHGE) are compositionally biased toward basic and acidic residues. Residues 23–40 (SLGNINPAYSNPSLSQSP) show a composition bias toward polar residues. A helical transmembrane segment spans residues 70 to 90 (LWAFTGPGFLMSIAYLDPGNI). Topologically, residues 91–96 (ESDLQS) are extracellular. Residues 97-117 (GAVAGFKLLWILLLATLVGLL) traverse the membrane as a helical segment. At 118-154 (LQRLAARLGVVTGLHLAEVCHRQYPKVPRVILWLMVE) the chain is on the cytoplasmic side. Residues 155–175 (LAIIGSDMQEVIGSAIAINLL) form a helical membrane-spanning segment. Residues 176-179 (SVGR) are Extracellular-facing. The chain crosses the membrane as a helical span at residues 180–200 (IPLWGGVLITIADTFVFLFLD). The Cytoplasmic segment spans residues 201–208 (KYGLRKLE). A helical transmembrane segment spans residues 209–229 (AFFGFLITIMALTFGYEYVTV). Topologically, residues 230-255 (KPSQSQVLKGMFVPSCSGCRTPQIEQ) are extracellular. A helical transmembrane segment spans residues 256 to 276 (AVGIVGAVIMPHNMYLHSALV). Over 277–301 (KSRQVNRNNKQEVREANKYFFIESC) the chain is Cytoplasmic. Residues 302–322 (IALFVSFIINVFVVSVFAEAF) form a helical membrane-spanning segment. The Extracellular portion of the chain corresponds to 323–360 (FGKTNEQVVEVCTNTSSPHAGLFPKDNSTLAVDIYKGG). Residues Asn-336 and Asn-349 are each glycosylated (N-linked (GlcNAc...) asparagine). Residues 361–381 (VVLGCYFGPAALYIWAVGILA) form a helical membrane-spanning segment. The Cytoplasmic portion of the chain corresponds to 382–408 (AGQSSTMTGTYSGQFVMEGFLNLKWSR). Residues 409-429 (FARVVLTRSIAIIPTLLVAVF) traverse the membrane as a helical segment. The Extracellular portion of the chain corresponds to 430-440 (QDVEHLTGMND). The chain crosses the membrane as a helical span at residues 441-461 (FLNVLQSLQLPFALIPILTFT). Residues 462–482 (SLRPVMSDFANGLGWRIAGGI) are Cytoplasmic-facing. Residues 483-503 (LVLIICSINMYFVVVYVRDLG) traverse the membrane as a helical segment. Over 504-506 (HVA) the chain is Extracellular. Residues 507–527 (LYVVAAVVSVAYLGFVFYLGW) traverse the membrane as a helical segment. At 528–568 (QCLIALGMSFLDCGHTCHLGLTAQPELYLLNTMDADSLVSR) the chain is on the cytoplasmic side. Positions 555-559 (YLLNT) are required for early endosome targeting. A phosphoserine mark is found at Ser-564 and Ser-567.

This sequence belongs to the NRAMP family. Forms a complex with NDFIP1 and NEDD4L, in cortical neurons, in response to iron and cobalt exposure; this interaction leads to SLC11A2 ubiquitination by NEDD4L and proteasome-dependent degradation. Interacts with NDFIP1, NDFIP2 and WWP2; this interaction leads to SLC11A2 ubiquitination by WWP2 and subsequent proteasome-dependent degradation. Interacts with COX2 and TOM6 at the outer mitochondrion membrane. Interacts with ARRDC1; this interaction regulates the incorporation of SLC11A2 into extracellular vesicles through an ubiquitination-dependent mechanism. Interacts with ARRDC4; controls the incorporation of SLC11A2 into extracellular vesicles through an ubiquitination-dependent mechanism. In terms of processing, ubiquitinated by WWP2. Post-translationally, N-glycosylated. Ubiquitously expressed. Expressed in erythroid progenitors.

Its subcellular location is the early endosome membrane. It is found in the apical cell membrane. The protein resides in the late endosome membrane. It localises to the lysosome membrane. The protein localises to the cell membrane. Its subcellular location is the extracellular vesicle membrane. It is found in the mitochondrion outer membrane. The protein resides in the golgi apparatus. It localises to the trans-Golgi network membrane. The protein localises to the recycling endosome membrane. The catalysed reaction is Fe(2+)(in) + H(+)(in) = Fe(2+)(out) + H(+)(out). It catalyses the reaction Co(2+)(out) + H(+)(out) = Co(2+)(in) + H(+)(in). The enzyme catalyses Cd(2+)(out) + H(+)(out) = Cd(2+)(in) + H(+)(in). It carries out the reaction Mn(2+)(in) + H(+)(in) = Mn(2+)(out) + H(+)(out). The catalysed reaction is Zn(2+)(out) + H(+)(out) = Zn(2+)(in) + H(+)(in). It catalyses the reaction Ni(2+)(out) + H(+)(out) = Ni(2+)(in) + H(+)(in). The enzyme catalyses H(+)(in) = H(+)(out). It carries out the reaction Fe(2+)(in) = Fe(2+)(out). Proton-coupled metal ion symporter operating with a proton to metal ion stoichiometry of 1:1. Selectively transports various divalent metal cations, in decreasing affinity: Cd(2+) &gt; Fe(2+) &gt; Co(2+), Mn(2+) &gt;&gt; Zn(2+), Ni(2+), VO(2+). Essential for maintenance of iron homeostasis by modulating intestinal absorption of dietary Fe(2+) and TF-associated endosomal Fe(2+) transport in erythroid precursors and other cells. Enables Fe(2+) and Mn(2+) ion entry into mitochondria, and is thus expected to promote mitochondrial heme synthesis, iron-sulfur cluster biogenesis and antioxidant defense. Can mediate uncoupled fluxes of either protons or metal ions. This Homo sapiens (Human) protein is Natural resistance-associated macrophage protein 2 (SLC11A2).